The following is a 190-amino-acid chain: ATP synthase subunit C lysine N-methyltransferase (190 aa).

Belongs to the ANT/ATPSC lysine N-methyltransferase family.

Its subcellular location is the mitochondrion. It carries out the reaction L-lysyl-[protein] + 3 S-adenosyl-L-methionine = N(6),N(6),N(6)-trimethyl-L-lysyl-[protein] + 3 S-adenosyl-L-homocysteine + 3 H(+). Its function is as follows. Mitochondrial protein-lysine N-methyltransferase that trimethylates ATP synthase subunit C. Trimethylation is required for proper incorporation of the C subunit into the ATP synthase complex and mitochondrial respiration. This chain is ATP synthase subunit C lysine N-methyltransferase, found in Caenorhabditis elegans.